A 466-amino-acid polypeptide reads, in one-letter code: MSTTTNIQLNNLTAISPIDGRYWGQVQVLSEYFSEYALIKYRVQVEIEYFIELSKLSELKPLNAVNKEDDHKKLRDIYLQFKESDAQKIKQIEKTTNHDIKAVEYFIKEKMHTELQYSEVVTEFIHFGLTSQDINNTAIPLSIVESVEKVLIPQLKQSILEPLRQFAQQWKSIPMLARTHGQPATPTTVGKELMVFIERLENQINHLEQSVPHTCKFGGATGNLNAHKVSYPAIDWVVFSEKFVKVLHPSLKRMRFTTQIEHYDNVASLLDAFKRINTILIDLCRDIWTYISMEYFNQKLVKGEVGSSTMPHKVNPIDFENAEGNMGVANALYEHLSAKLPISRLQRDLTDSTVLRSIGVPFSHSILSFKSIQRGLSKLVLNEANIAKDLDANWAVVSEAIQTILRREGFPKPYEALKELTRVSGSKKITESDIQTFIDSLSIPDDIKSELKLITPFNYIGIIPDF.

Residues 21 to 22, 97 to 99, and 130 to 131 contribute to the substrate site; these read RY, NHD, and TS. The active-site Proton donor/acceptor is His180. Gln259 provides a ligand contact to substrate. Ser307 acts as the Proton donor/acceptor in catalysis. Positions 347, 352, and 356 each coordinate substrate.

It belongs to the lyase 1 family. Adenylosuccinate lyase subfamily. As to quaternary structure, homotetramer. Residues from neighboring subunits contribute catalytic and substrate-binding residues to each active site.

It catalyses the reaction N(6)-(1,2-dicarboxyethyl)-AMP = fumarate + AMP. It carries out the reaction (2S)-2-[5-amino-1-(5-phospho-beta-D-ribosyl)imidazole-4-carboxamido]succinate = 5-amino-1-(5-phospho-beta-D-ribosyl)imidazole-4-carboxamide + fumarate. It functions in the pathway purine metabolism; AMP biosynthesis via de novo pathway; AMP from IMP: step 2/2. It participates in purine metabolism; IMP biosynthesis via de novo pathway; 5-amino-1-(5-phospho-D-ribosyl)imidazole-4-carboxamide from 5-amino-1-(5-phospho-D-ribosyl)imidazole-4-carboxylate: step 2/2. The polypeptide is Adenylosuccinate lyase (purB) (Dictyostelium discoideum (Social amoeba)).